A 165-amino-acid chain; its full sequence is UPF0114 protein Ent638_3411 (165 aa).

Helical transmembrane passes span 15–35 (LLAP…IKFF), 53–73 (LILV…LVMV), and 136–156 (LMWY…MGYL).

It belongs to the UPF0114 family.

It localises to the cell membrane. The polypeptide is UPF0114 protein Ent638_3411 (Enterobacter sp. (strain 638)).